The sequence spans 864 residues: Leucine--tRNA ligase (864 aa).

Residues 42-52 carry the 'HIGH' region motif; sequence PYPSGKLHMGH. Residues 624–628 carry the 'KMSKS' region motif; that stretch reads KMSKS. Lysine 627 contributes to the ATP binding site.

Belongs to the class-I aminoacyl-tRNA synthetase family.

The protein localises to the cytoplasm. It carries out the reaction tRNA(Leu) + L-leucine + ATP = L-leucyl-tRNA(Leu) + AMP + diphosphate. This chain is Leucine--tRNA ligase, found in Burkholderia vietnamiensis (strain G4 / LMG 22486) (Burkholderia cepacia (strain R1808)).